The following is a 420-amino-acid chain: S-adenosylmethionine synthase (420 aa).

Histidine 16 contacts ATP. Aspartate 18 contacts Mg(2+). A K(+)-binding site is contributed by glutamate 44. Residues glutamate 57 and glutamine 100 each contribute to the L-methionine site. Positions 100 to 110 (QSADIAQGVDK) are flexible loop. Residues 175–177 (DGK), 251–252 (KF), aspartate 260, 266–267 (RK), alanine 283, and lysine 287 each bind ATP. Aspartate 260 provides a ligand contact to L-methionine. Lysine 291 lines the L-methionine pocket.

It belongs to the AdoMet synthase family. Homotetramer; dimer of dimers. Mg(2+) serves as cofactor. It depends on K(+) as a cofactor.

It is found in the cytoplasm. It carries out the reaction L-methionine + ATP + H2O = S-adenosyl-L-methionine + phosphate + diphosphate. Its pathway is amino-acid biosynthesis; S-adenosyl-L-methionine biosynthesis; S-adenosyl-L-methionine from L-methionine: step 1/1. In terms of biological role, catalyzes the formation of S-adenosylmethionine (AdoMet) from methionine and ATP. The overall synthetic reaction is composed of two sequential steps, AdoMet formation and the subsequent tripolyphosphate hydrolysis which occurs prior to release of AdoMet from the enzyme. This Trichodesmium erythraeum (strain IMS101) protein is S-adenosylmethionine synthase.